Reading from the N-terminus, the 130-residue chain is Small ribosomal subunit protein uS11 (130 aa).

This sequence belongs to the universal ribosomal protein uS11 family. In terms of assembly, part of the 30S ribosomal subunit. Interacts with proteins S7 and S18. Binds to IF-3.

In terms of biological role, located on the platform of the 30S subunit, it bridges several disparate RNA helices of the 16S rRNA. Forms part of the Shine-Dalgarno cleft in the 70S ribosome. This chain is Small ribosomal subunit protein uS11, found in Xylella fastidiosa (strain 9a5c).